Here is a 533-residue protein sequence, read N- to C-terminus: (E)-beta-farnesene synthase (533 aa).

Mg(2+)-binding residues include Asp-286, Asp-290, Asn-430, Ser-434, and Glu-438. The DDXXD motif motif lies at 286–290 (DDMMD).

This sequence belongs to the terpene synthase family. Mg(2+) serves as cofactor. The cofactor is Co(2+). Requires Mn(2+) as cofactor.

It is found in the cytoplasm. The catalysed reaction is (2E,6E)-farnesyl diphosphate = (E)-beta-farnesene + diphosphate. It participates in secondary metabolite biosynthesis; terpenoid biosynthesis. In terms of biological role, sesquiterpene cyclase catalyzing the production of beta-farnesene and alpha-bergamotene in equal amounts from farnesyl diphosphate. Involved in indirect defense by producing volatile signals attracting natural enemies of herbivores. The protein is (E)-beta-farnesene synthase of Zea mays subsp. huehuetenangensis (San Antonio Huista teosinte).